The sequence spans 924 residues: Isoleucine--tRNA ligase (924 aa).

Residues 57-67 (PYANGDIHMGH) carry the 'HIGH' region motif. E552 contacts L-isoleucyl-5'-AMP. Positions 593 to 597 (KMSKS) match the 'KMSKS' region motif. K596 contacts ATP. Zn(2+) contacts are provided by C891, C894, C911, and C914.

The protein belongs to the class-I aminoacyl-tRNA synthetase family. IleS type 1 subfamily. As to quaternary structure, monomer. Zn(2+) serves as cofactor.

It is found in the cytoplasm. It catalyses the reaction tRNA(Ile) + L-isoleucine + ATP = L-isoleucyl-tRNA(Ile) + AMP + diphosphate. Its function is as follows. Catalyzes the attachment of isoleucine to tRNA(Ile). As IleRS can inadvertently accommodate and process structurally similar amino acids such as valine, to avoid such errors it has two additional distinct tRNA(Ile)-dependent editing activities. One activity is designated as 'pretransfer' editing and involves the hydrolysis of activated Val-AMP. The other activity is designated 'posttransfer' editing and involves deacylation of mischarged Val-tRNA(Ile). The chain is Isoleucine--tRNA ligase from Geobacillus kaustophilus (strain HTA426).